The following is a 56-amino-acid chain: Small ribosomal subunit protein uS14 (56 aa).

Cys-21, Cys-24, Cys-39, and Cys-42 together coordinate Zn(2+).

It belongs to the universal ribosomal protein uS14 family. As to quaternary structure, component of the 40S small ribosomal subunit. It depends on Zn(2+) as a cofactor.

It localises to the cytoplasm. It is found in the cytosol. The protein localises to the rough endoplasmic reticulum. The chain is Small ribosomal subunit protein uS14 (RpS29) from Lonomia obliqua (Moth).